A 429-amino-acid chain; its full sequence is Ribosomal RNA small subunit methyltransferase B (429 aa).

S-adenosyl-L-methionine contacts are provided by residues 254 to 260 (CAAPGGK), D277, D303, and D322. The active-site Nucleophile is the C375.

This sequence belongs to the class I-like SAM-binding methyltransferase superfamily. RsmB/NOP family.

The protein localises to the cytoplasm. The enzyme catalyses cytidine(967) in 16S rRNA + S-adenosyl-L-methionine = 5-methylcytidine(967) in 16S rRNA + S-adenosyl-L-homocysteine + H(+). In terms of biological role, specifically methylates the cytosine at position 967 (m5C967) of 16S rRNA. The chain is Ribosomal RNA small subunit methyltransferase B from Escherichia coli (strain SE11).